The sequence spans 447 residues: Voltage-gated purine nucleotide uniporter SLC17A9 (447 aa).

The interval 1 to 26 (MPSQRSSLMQPIPEETRKTPSAAAED) is disordered. Positions 14–26 (EETRKTPSAAAED) are enriched in basic and acidic residues. A run of 11 helical transmembrane segments spans residues 36–58 (LWTGMLLLGTCLLYCTRVTMPVC), 74–94 (GIVLSSFFWGYCLTQVVGGHL), 103–123 (VILLSASAWGFITVTTPLLAH), 129–149 (LAFVTFSRILTGLLQGVYFPA), 169–189 (TVGAGSQVGTLVTGGIGSVLL), 197–217 (VFYFSGGLTLLWVYYVYKYLL), 252–272 (VWAVICSQLSSACSFFILLSW), 287–307 (WVFNVVPWLLAIPASLFSGFI), 327–347 (VMGLGLSSIFALCLGHTTSFL), 380–400 (GFLFGVANTAGALAGVVGVCL), and 413–433 (CVFHLVAIVSNLGLGTFLVFG).

The protein belongs to the major facilitator superfamily. Sodium/anion cotransporter family.

The protein resides in the cytoplasmic vesicle. Its subcellular location is the secretory vesicle. The protein localises to the chromaffin granule membrane. It localises to the secretory vesicle membrane. It is found in the lysosome membrane. It carries out the reaction ATP(in) = ATP(out). The enzyme catalyses ADP(in) = ADP(out). The catalysed reaction is GTP(in) = GTP(out). With respect to regulation, activity is chloride-dependent. Voltage-gated ATP nucleotide uniporter that can also transport the purine nucleotides ADP and GTP. Uses the membrane potential as the driving force to control ATP accumulation in lysosomes and secretory vesicles. By controlling ATP storage in lysosomes, regulates ATP-dependent proteins of these organelles. Also indirectly regulates the exocytosis of ATP through its import into lysosomes in astrocytes and secretory vesicles such as adrenal chromaffin granules, mucin granules and synaptic vesicles. The protein is Voltage-gated purine nucleotide uniporter SLC17A9 of Rattus norvegicus (Rat).